The following is a 185-amino-acid chain: Neuronal vesicle trafficking-associated protein 1 (185 aa).

Residues 1–82 are Cytoplasmic-facing; it reads MVKLGNNFAE…ITEGVTERFK (82 aa). The chain crosses the membrane as a helical; Signal-anchor for type II membrane protein span at residues 83–103; it reads VSVLVLFALAFLTCVVFLVVY. Residues 104–185 lie on the Lumenal side of the membrane; sequence KVYKYDRACP…QETEAAEKSA (82 aa). The interval 129–164 is required for GRIP1 interaction; the sequence is ESYYAEQDSSAREKFYTVINHYNLAKQSITRSVSPW.

This sequence belongs to the NSG family. As to quaternary structure, forms a complex with GRIP1, GRIA2 and STX12 through direct interaction with GRIP1; controls the intracellular fate of AMPAR and the endosomal sorting of the GRIA2 subunit toward recycling and membrane targeting. Interacts with STX12. Interacts with APP; could regulate APP processing. Interacts with FAM171A1.

Its subcellular location is the membrane. It localises to the golgi apparatus. The protein localises to the trans-Golgi network membrane. It is found in the endosome membrane. The protein resides in the cell projection. Its subcellular location is the dendrite. It localises to the early endosome membrane. The protein localises to the late endosome membrane. It is found in the lysosome lumen. The protein resides in the recycling endosome membrane. Its subcellular location is the cytoplasmic vesicle membrane. It localises to the golgi stack membrane. The protein localises to the endosome. It is found in the multivesicular body membrane. The protein resides in the endoplasmic reticulum membrane. Plays a role in the recycling mechanism in neurons of multiple receptors, including AMPAR, APP and L1CAM and acts at the level of early endosomes to promote sorting of receptors toward a recycling pathway. Regulates sorting and recycling of GRIA2 through interaction with GRIP1 and then contributes to the regulation of synaptic transmission and plasticity by affecting the recycling and targeting of AMPA receptors to the synapse. Is required for faithful sorting of L1CAM to axons by facilitating trafficking from somatodendritic early endosome or the recycling endosome. In an other hand, induces apoptosis via the activation of CASP3 in response to DNA damage. The sequence is that of Neuronal vesicle trafficking-associated protein 1 from Macaca fascicularis (Crab-eating macaque).